The sequence spans 512 residues: Tyrosine-protein kinase Lyn (512 aa).

A disordered region spans residues Met1–Leu50. Gly2 carries the N-myristoyl glycine lipid modification. A lipid anchor (S-palmitoyl cysteine) is attached at Cys3. In terms of domain architecture, SH3 spans Glu63–Thr123. The region spanning Trp129–Cys226 is the SH2 domain. The residue at position 193 (Tyr193) is a Phosphotyrosine. The residue at position 228 (Ser228) is a Phosphoserine. The Protein kinase domain occupies Ile247–Tyr501. Residues Leu253 to Val261 and Lys275 each bind ATP. Phosphotyrosine is present on residues Tyr306 and Tyr316. The active-site Proton acceptor is Asp367. Residue Tyr397 is modified to Phosphotyrosine; by autocatalysis. 2 positions are modified to phosphotyrosine: Tyr460 and Tyr473. Tyr508 is subject to Phosphotyrosine; by autocatalysis, CSK and MATK.

Belongs to the protein kinase superfamily. Tyr protein kinase family. SRC subfamily. As to quaternary structure, interacts with TEC. Interacts (via SH2 domain) with FLT3 (tyrosine phosphorylated). Interacts with LIME1 and with CD79A upon activation of the B-cell antigen receptor. Interacts with the B-cell receptor complex. Interacts with phosphorylated THEMIS2. Interacts with EPOR. Interacts with MS4A2/FCER1B. Interaction (via the SH2 and SH3 domains) with MUC1 is stimulated by IL7 and the subsequent phosphorylation increases the binding between MUC1 and CTNNB1/beta-catenin. Interacts with ADAM15. Interacts with NDFIP2 and more weakly with NDFIP1. Interacts with FASLG. Interacts with KIT. Interacts with HCLS1. Interacts with FCGR2B. Interacts with FCGR1A; the interaction may be indirect. Interacts with CD19, CD22, CD79A and CD79B. Interacts (via SH3 domain) with CBLC, PPP1R15A and PDE4A. Interacts with TGFB1I1. Interacts (via SH3 domain) with PIK3R1, the regulatory subunit of phosphatidylinositol 3-kinase; this interaction enhances phosphatidylinositol 3-kinase activity. Interacts with CSF2RB, the common subunit of the IL3, IL5 and CSF2 receptors. Interacts with PAG1; identified in a complex with PAG1 and STAT3. Interacts with ABL1. Interacts with PTPN6/SHP-1. Interacts (via SH3 domain) with SCIMP (via proline-rich region). This interaction facilitates the phosphorylation of SCIMP 'Tyr-96', which enhances binding of SCIMP to TLR4, and consequently the phosphorylation of TLR4 in response to stimulation by lipopolysaccharide in macrophages. Interacts with LPXN (via LD motif 3) and the interaction is induced upon B-cell antigen receptor (BCR) activation. Interacts (via SH3-domain) with ANKRD54 (via ankyrin repeat region) in an activation-independent status of LYN. Forms a multiprotein complex with ANKRD54 and HCLS1. Interacts (via SH2 and SH3 domains) with UNC119; leading to LYN activation. Interacts with CD36. Interacts with LYN. Interacts with SKAP1 and FYB1; this interaction promotes the phosphorylation of CLNK. Interacts with BCAR1/CAS and NEDD9/HEF1. Ubiquitinated. Ubiquitination is SH3-dependent. In terms of processing, autophosphorylated. Phosphorylated on tyrosine residues in response to KIT signaling. Phosphorylation at Tyr-397 is required for optimal activity. Phosphorylation at Tyr-508 inhibits kinase activity. Phosphorylated at Tyr-508 by CSK. Dephosphorylated by PTPRC/CD45. Becomes rapidly phosphorylated upon activation of the B-cell receptor and the immunoglobulin receptor FCGR1A. Phosphorylated in response to integrin ITGB1 in B-cells. Detected in spleen (at protein level). Expressed predominantly in B-lymphoid and myeloid cells.

The protein localises to the cell membrane. It localises to the nucleus. It is found in the cytoplasm. The protein resides in the perinuclear region. Its subcellular location is the golgi apparatus. The protein localises to the membrane. It carries out the reaction L-tyrosyl-[protein] + ATP = O-phospho-L-tyrosyl-[protein] + ADP + H(+). Its activity is regulated as follows. Subject to autoinhibition, mediated by intramolecular interactions between the SH2 domain and the C-terminal phosphotyrosine. Phosphorylation at Tyr-397 is required for optimal activity. Phosphorylated by CSK at Tyr-508; phosphorylation at Tyr-508 inhibits kinase activity. Kinase activity is modulated by dephosphorylation by PTPRC/CD45. Non-receptor tyrosine-protein kinase that transmits signals from cell surface receptors and plays an important role in the regulation of innate and adaptive immune responses, hematopoiesis, responses to growth factors and cytokines, integrin signaling, but also responses to DNA damage and genotoxic agents. Functions primarily as negative regulator, but can also function as activator, depending on the context. Required for the initiation of the B-cell response, but also for its down-regulation and termination. Plays an important role in the regulation of B-cell differentiation, proliferation, survival and apoptosis, and is important for immune self-tolerance. Acts downstream of several immune receptors, including the B-cell receptor, CD79A, CD79B, CD5, CD19, CD22, FCER1, FCGR2, FCGR1A, TLR2 and TLR4. Plays a role in the inflammatory response to bacterial lipopolysaccharide. Mediates the responses to cytokines and growth factors in hematopoietic progenitors, platelets, erythrocytes, and in mature myeloid cells, such as dendritic cells, neutrophils and eosinophils. Acts downstream of EPOR, KIT, MPL, the chemokine receptor CXCR4, as well as the receptors for IL3, IL5 and CSF2. Plays an important role in integrin signaling. Regulates cell proliferation, survival, differentiation, migration, adhesion, degranulation, and cytokine release. Involved in the regulation of endothelial activation, neutrophil adhesion and transendothelial migration. Down-regulates signaling pathways by phosphorylation of immunoreceptor tyrosine-based inhibitory motifs (ITIM), that then serve as binding sites for phosphatases, such as PTPN6/SHP-1, PTPN11/SHP-2 and INPP5D/SHIP-1, that modulate signaling by dephosphorylation of kinases and their substrates. Phosphorylates LIME1 in response to CD22 activation. Phosphorylates BTK, CBL, CD5, CD19, CD72, CD79A, CD79B, CSF2RB, DOK1, HCLS1, LILRB3/PIR-B, MS4A2/FCER1B, SYK and TEC. Promotes phosphorylation of SIRPA, PTPN6/SHP-1, PTPN11/SHP-2 and INPP5D/SHIP-1. Required for rapid phosphorylation of FER in response to FCER1 activation. Mediates KIT phosphorylation. Acts as an effector of EPOR (erythropoietin receptor) in controlling KIT expression and may play a role in erythroid differentiation during the switch between proliferation and maturation. Depending on the context, activates or inhibits several signaling cascades. Regulates phosphatidylinositol 3-kinase activity and AKT1 activation. Regulates activation of the MAP kinase signaling cascade, including activation of MAP2K1/MEK1, MAPK1/ERK2, MAPK3/ERK1, MAPK8/JNK1 and MAPK9/JNK2. Mediates activation of STAT5A and/or STAT5B. Phosphorylates LPXN on 'Tyr-72'. Kinase activity facilitates TLR4-TLR6 heterodimerization and signal initiation. Phosphorylates SCIMP on 'Tyr-96'; this enhances binding of SCIMP to TLR4, promoting the phosphorylation of TLR4, and a selective cytokine response to lipopolysaccharide in macrophages. Phosphorylates CLNK. Phosphorylates BCAR1/CAS and NEDD9/HEF1. This chain is Tyrosine-protein kinase Lyn (Lyn), found in Rattus norvegicus (Rat).